The sequence spans 175 residues: Protein tyrosine phosphatase PRL-1 (175 aa).

Residues 15-172 enclose the Tyrosine-protein phosphatase domain; it reads KPSRVLFHFL…YKRRHQGAGC (158 aa). Cys-53 and Cys-114 are joined by a disulfide. The Proton donor role is filled by Asp-76. Cys-114 (phosphocysteine intermediate) is an active-site residue. 116-120 contributes to the substrate binding site; the sequence is AGLGR. Residue Cys-172 is modified to Cysteine methyl ester. Cys-172 carries S-farnesyl cysteine lipidation. A propeptide spans 173–175 (removed in mature form); it reads VIM.

This sequence belongs to the protein-tyrosine phosphatase family.

The protein localises to the cytoplasm. It is found in the mitochondrion matrix. Its subcellular location is the kinetoplast. It localises to the secreted. The protein resides in the extracellular exosome. The enzyme catalyses O-phospho-L-tyrosyl-[protein] + H2O = L-tyrosyl-[protein] + phosphate. Its activity is regulated as follows. Activated in a reduced environment which promotes the reduction of the disulfide bond between the regulatory Cys-53 and catalytic Cys-114 residues. Functionally, has protein tyrosine phosphatase activity and may act as a virulence factor to support intracellular survival in host macrophages. The protein is Protein tyrosine phosphatase PRL-1 of Leishmania major.